The following is a 430-amino-acid chain: Endochitinase 46 (430 aa).

An N-terminal signal peptide occupies residues 1 to 22 (MLSFLGKSVALLAALQATLSSA). A propeptide spanning residues 23–35 (SPLATEERSIEKR) is cleaved from the precursor. The GH18 domain maps to 39-408 (YANSVYFTNW…GTSHRALGGL (370 aa)). Chitin is bound by residues 103-104 (GT) and 130-133 (GGWT). Glu-172 (proton donor) is an active-site residue. Tyr-173 serves as a coordination point for chitin. Asn-219 is a glycosylation site (N-linked (GlcNAc...) asparagine). Chitin contacts are provided by residues 238 to 241 (MAYD) and Trp-385.

This sequence belongs to the glycosyl hydrolase 18 family. Chitinase class V subfamily.

Its subcellular location is the secreted. The enzyme catalyses Random endo-hydrolysis of N-acetyl-beta-D-glucosaminide (1-&gt;4)-beta-linkages in chitin and chitodextrins.. Functionally, secreted chitinase involved in the degradation of chitin, a component of the cell walls of fungi and exoskeletal elements of some animals (including worms and arthropods). Plays a morphogenetic role during apical growth, cell division and differentiation (cell wall morphogenesis). Also acts as an antifungal agent. Involved in the degradation and further assimilation of phytopathogenic fungi, namely mycoparasitism, the major mechanism accounting for the antagonistic activity against phytopathogenic fungi displayed by Trichoderma. The sequence is that of Endochitinase 46 (chit46) from Trichoderma harzianum (Hypocrea lixii).